A 148-amino-acid chain; its full sequence is uncharacterized protein (148 aa).

Residues 122–148 are disordered; sequence HNWRKRMGTRRGRHEQSPTSRPRKGPD. Basic residues predominate over residues 123–134; that stretch reads NWRKRMGTRRGR.

This is an uncharacterized protein from Homo sapiens (Human).